The following is a 295-amino-acid chain: Ribosomal protein L11 methyltransferase (295 aa).

S-adenosyl-L-methionine is bound by residues threonine 150, glycine 171, aspartate 193, and asparagine 232.

Belongs to the methyltransferase superfamily. PrmA family.

The protein localises to the cytoplasm. It carries out the reaction L-lysyl-[protein] + 3 S-adenosyl-L-methionine = N(6),N(6),N(6)-trimethyl-L-lysyl-[protein] + 3 S-adenosyl-L-homocysteine + 3 H(+). Functionally, methylates ribosomal protein L11. The sequence is that of Ribosomal protein L11 methyltransferase from Neisseria meningitidis serogroup B (strain ATCC BAA-335 / MC58).